Consider the following 336-residue polypeptide: N-acetyl-gamma-glutamyl-phosphate reductase (336 aa).

Cysteine 144 is a catalytic residue.

It belongs to the NAGSA dehydrogenase family. Type 1 subfamily.

It is found in the cytoplasm. The enzyme catalyses N-acetyl-L-glutamate 5-semialdehyde + phosphate + NADP(+) = N-acetyl-L-glutamyl 5-phosphate + NADPH + H(+). It functions in the pathway amino-acid biosynthesis; L-arginine biosynthesis; N(2)-acetyl-L-ornithine from L-glutamate: step 3/4. Catalyzes the NADPH-dependent reduction of N-acetyl-5-glutamyl phosphate to yield N-acetyl-L-glutamate 5-semialdehyde. This Methanosarcina acetivorans (strain ATCC 35395 / DSM 2834 / JCM 12185 / C2A) protein is N-acetyl-gamma-glutamyl-phosphate reductase.